The primary structure comprises 339 residues: Heat-inducible transcription repressor HrcA (339 aa).

The protein belongs to the HrcA family.

Negative regulator of class I heat shock genes (grpE-dnaK-dnaJ and groELS operons). Prevents heat-shock induction of these operons. This chain is Heat-inducible transcription repressor HrcA, found in Frankia casuarinae (strain DSM 45818 / CECT 9043 / HFP020203 / CcI3).